Here is a 571-residue protein sequence, read N- to C-terminus: Phosphoenolpyruvate-protein phosphotransferase (571 aa).

Catalysis depends on H207, which acts as the Tele-phosphohistidine intermediate. Positions 312 and 348 each coordinate phosphoenolpyruvate. Residues E435 and D459 each contribute to the Mg(2+) site. Residues 458–459 and R469 contribute to the phosphoenolpyruvate site; that span reads ND. C506 functions as the Proton donor in the catalytic mechanism.

Belongs to the PEP-utilizing enzyme family. In terms of assembly, homodimer. Mg(2+) is required as a cofactor.

The protein resides in the cytoplasm. It carries out the reaction L-histidyl-[protein] + phosphoenolpyruvate = N(pros)-phospho-L-histidyl-[protein] + pyruvate. General (non sugar-specific) component of the phosphoenolpyruvate-dependent sugar phosphotransferase system (sugar PTS). This major carbohydrate active-transport system catalyzes the phosphorylation of incoming sugar substrates concomitantly with their translocation across the cell membrane. Enzyme I transfers the phosphoryl group from phosphoenolpyruvate (PEP) to the phosphoryl carrier protein (HPr). The polypeptide is Phosphoenolpyruvate-protein phosphotransferase (ptsI) (Chlamydia trachomatis serovar D (strain ATCC VR-885 / DSM 19411 / UW-3/Cx)).